A 187-amino-acid polypeptide reads, in one-letter code: Large ribosomal subunit protein uL5 (187 aa).

It belongs to the universal ribosomal protein uL5 family. In terms of assembly, part of the 50S ribosomal subunit; part of the 5S rRNA/L5/L18/L25 subcomplex. Contacts the 5S rRNA and the P site tRNA. Forms a bridge to the 30S subunit in the 70S ribosome.

Functionally, this is one of the proteins that bind and probably mediate the attachment of the 5S RNA into the large ribosomal subunit, where it forms part of the central protuberance. In the 70S ribosome it contacts protein S13 of the 30S subunit (bridge B1b), connecting the 2 subunits; this bridge is implicated in subunit movement. Contacts the P site tRNA; the 5S rRNA and some of its associated proteins might help stabilize positioning of ribosome-bound tRNAs. This chain is Large ribosomal subunit protein uL5, found in Mycobacterium leprae (strain Br4923).